The following is a 145-amino-acid chain: D-aminoacyl-tRNA deacylase (145 aa).

Residues 137 to 138 (GP) carry the Gly-cisPro motif, important for rejection of L-amino acids motif.

The protein belongs to the DTD family. As to quaternary structure, homodimer.

The protein resides in the cytoplasm. The catalysed reaction is glycyl-tRNA(Ala) + H2O = tRNA(Ala) + glycine + H(+). It carries out the reaction a D-aminoacyl-tRNA + H2O = a tRNA + a D-alpha-amino acid + H(+). Its function is as follows. An aminoacyl-tRNA editing enzyme that deacylates mischarged D-aminoacyl-tRNAs. Also deacylates mischarged glycyl-tRNA(Ala), protecting cells against glycine mischarging by AlaRS. Acts via tRNA-based rather than protein-based catalysis; rejects L-amino acids rather than detecting D-amino acids in the active site. By recycling D-aminoacyl-tRNA to D-amino acids and free tRNA molecules, this enzyme counteracts the toxicity associated with the formation of D-aminoacyl-tRNA entities in vivo and helps enforce protein L-homochirality. The protein is D-aminoacyl-tRNA deacylase of Lactobacillus gasseri (strain ATCC 33323 / DSM 20243 / BCRC 14619 / CIP 102991 / JCM 1131 / KCTC 3163 / NCIMB 11718 / NCTC 13722 / AM63).